Consider the following 420-residue polypeptide: Transmembrane protease serine 11B-like protein (420 aa).

At 1-19 the chain is on the cytoplasmic side; that stretch reads MTVSKLRPVIASRKSFPPW. Residues 20-40 traverse the membrane as a helical; Signal-anchor for type II membrane protein segment; the sequence is MIILGVLGVLAILGLIIGLLV. The Extracellular portion of the chain corresponds to 41–420; sequence HFLAVENKIY…RDWIASKTGI (380 aa). In terms of domain architecture, SEA spans 48–165; that stretch reads KIYYYQGSFK…GSLKLTEITK (118 aa). Residues Asn111 and Asn146 are each glycosylated (N-linked (GlcNAc...) asparagine). The region spanning 189 to 419 is the Peptidase S1 domain; the sequence is ITGGSTAQKG…YRDWIASKTG (231 aa). Cys214 and Cys230 form a disulfide bridge. The Charge relay system role is filled by His229. Residue Asn239 is glycosylated (N-linked (GlcNAc...) asparagine). The active-site Charge relay system is Asp274. Intrachain disulfides connect Cys339/Cys355 and Cys366/Cys395. The active-site Charge relay system is Ser370.

The protein belongs to the peptidase S1 family.

It localises to the membrane. The protein resides in the cell membrane. With respect to regulation, inhibited by aprotinin, leupeptin, benzamidine, SERPINA1, SPINT1 and SPINT2. Its function is as follows. Serine protease. The protein is Transmembrane protease serine 11B-like protein (Tmprss11bnl) of Rattus norvegicus (Rat).